Here is a 142-residue protein sequence, read N- to C-terminus: Large-conductance mechanosensitive channel (142 aa).

The next 2 membrane-spanning stretches (helical) occupy residues 10–30 and 86–106; these read FAIK…AAFS and GNFI…FLMV.

It belongs to the MscL family. As to quaternary structure, homopentamer.

It localises to the cell inner membrane. Channel that opens in response to stretch forces in the membrane lipid bilayer. May participate in the regulation of osmotic pressure changes within the cell. The protein is Large-conductance mechanosensitive channel of Polaromonas naphthalenivorans (strain CJ2).